Here is a 139-residue protein sequence, read N- to C-terminus: Maximins 4/H3 type 5 (139 aa).

A signal peptide spans 1-18 (MNFKYIFAVSFLIASAYA). The propeptide occupies 19 to 43 (RSVQNDEQSLSQRDVLEEESLREIR). At Asn70 the chain carries Asparagine amide. Positions 74–118 (TAEEHEVMKRLEAVMRDLDSLDHPEEASERETRGFNQDEIAKEKR) are excised as a propeptide. Residue Ile138 is modified to Isoleucine amide.

This sequence belongs to the bombinin family. As to expression, expressed by the skin glands.

The protein localises to the secreted. Its function is as follows. Maximin-4 shows antibacterial activity against both Gram-positive and Gram-negative bacteria. It also shows antimicrobial activity against the fungus C.albicans, but not against A.flavus nor P.uticale. It has little hemolytic activity. It does not possess a significant cytotoxicity against tumor cell lines. It does not possess a significant anti-HIV activity. In terms of biological role, maximin-H3 shows antibacterial activity against both Gram-positive and Gram-negative bacteria. It also shows antimicrobial activity against the fungus C.albicans. Shows strong hemolytic activity. The polypeptide is Maximins 4/H3 type 5 (Bombina maxima (Giant fire-bellied toad)).